The sequence spans 423 residues: Glutamyl-tRNA reductase (423 aa).

Substrate-binding positions include 49 to 52 (TCNR), serine 111, 116 to 118 (EPQ), and glutamine 122. Cysteine 50 functions as the Nucleophile in the catalytic mechanism. NADP(+) is bound at residue 191-196 (GAGEMS).

It belongs to the glutamyl-tRNA reductase family. In terms of assembly, homodimer.

It carries out the reaction (S)-4-amino-5-oxopentanoate + tRNA(Glu) + NADP(+) = L-glutamyl-tRNA(Glu) + NADPH + H(+). The protein operates within porphyrin-containing compound metabolism; protoporphyrin-IX biosynthesis; 5-aminolevulinate from L-glutamyl-tRNA(Glu): step 1/2. Its function is as follows. Catalyzes the NADPH-dependent reduction of glutamyl-tRNA(Glu) to glutamate 1-semialdehyde (GSA). The sequence is that of Glutamyl-tRNA reductase from Syntrophus aciditrophicus (strain SB).